The chain runs to 2073 residues: Dedicator of cytokinesis protein 11 (2073 aa).

A Phosphoserine modification is found at Ser12. Thr16 is subject to Phosphothreonine. 2 positions are modified to phosphoserine: Ser23 and Ser161. The region spanning 165-272 is the PH domain; that stretch reads GVIKQGWLHK…WLIMLKKIIQ (108 aa). Residue Tyr248 is modified to Phosphotyrosine. 2 positions are modified to phosphoserine: Ser306 and Ser445. The C2 DOCK-type domain maps to 640-818; that stretch reads KNHLYVYPLQ…PLLKIKTHLE (179 aa). The segment at 1227-1267 is disordered; the sequence is QNGHGIKREDSRGSLIPEGATGFPDPGSTSENTRQSSSRSS. 2 positions are modified to phosphoserine: Ser1237 and Ser1240. Residues 1254–1267 show a composition bias toward low complexity; the sequence is STSENTRQSSSRSS. The 428-residue stretch at 1609-2036 folds into the DOCKER domain; the sequence is KSYASTPELR…LSDIIHEQIL (428 aa).

This sequence belongs to the DOCK family. As to quaternary structure, interacts with CDC42. As to expression, expressed in spleen, thymus, mesenteric lymph nodes (MLN), bone marrow and peripheral blood lymphocytes. Enriched in B-cells from germinal centers. Expressed in B-, T- and dendritic cells as well as Purkinje cells.

Functionally, guanine nucleotide-exchange factor (GEF) that activates CDC42 by exchanging bound GDP for free GTP. Required for marginal zone (MZ) B-cell development, is associated with early bone marrow B-cell development, MZ B-cell formation, MZ B-cell number and marginal metallophilic macrophages morphology. Facilitates filopodia formation through the activation of CDC42. The sequence is that of Dedicator of cytokinesis protein 11 from Mus musculus (Mouse).